The following is a 127-amino-acid chain: uncharacterized protein (127 aa).

Positions 1 to 46 constitute an HTH asnC-type domain; it reads MEVGLSPSACLRRIKLMEQAGVIRGYTALVDPTQSESTIAVIINIT.

Functionally, not known, symbiotically active. This is an uncharacterized protein from Sinorhizobium fredii (strain NBRC 101917 / NGR234).